A 307-amino-acid chain; its full sequence is NAD kinase (307 aa).

Asp-78 serves as the catalytic Proton acceptor. NAD(+) is bound by residues 78–79, His-83, 154–155, Arg-165, Arg-182, Asp-184, and Gln-255; these read DG and NE.

This sequence belongs to the NAD kinase family. A divalent metal cation is required as a cofactor.

Its subcellular location is the cytoplasm. The enzyme catalyses NAD(+) + ATP = ADP + NADP(+) + H(+). Involved in the regulation of the intracellular balance of NAD and NADP, and is a key enzyme in the biosynthesis of NADP. Catalyzes specifically the phosphorylation on 2'-hydroxyl of the adenosine moiety of NAD to yield NADP. In Halorhodospira halophila (strain DSM 244 / SL1) (Ectothiorhodospira halophila (strain DSM 244 / SL1)), this protein is NAD kinase.